The sequence spans 318 residues: Carbamate kinase (318 aa).

It belongs to the carbamate kinase family.

The protein resides in the cytoplasm. It carries out the reaction hydrogencarbonate + NH4(+) + ATP = carbamoyl phosphate + ADP + H2O + H(+). Its pathway is metabolic intermediate metabolism; carbamoyl phosphate degradation; CO(2) and NH(3) from carbamoyl phosphate: step 1/1. This is Carbamate kinase (arcC) from Lentilactobacillus hilgardii (Lactobacillus hilgardii).